The chain runs to 313 residues: 4-hydroxy-3-methylbut-2-enyl diphosphate reductase (313 aa).

Residue Cys14 coordinates [4Fe-4S] cluster. (2E)-4-hydroxy-3-methylbut-2-enyl diphosphate-binding residues include His43 and His76. The dimethylallyl diphosphate site is built by His43 and His76. Residues His43 and His76 each contribute to the isopentenyl diphosphate site. A [4Fe-4S] cluster-binding site is contributed by Cys98. His126 contributes to the (2E)-4-hydroxy-3-methylbut-2-enyl diphosphate binding site. His126 is a dimethylallyl diphosphate binding site. His126 serves as a coordination point for isopentenyl diphosphate. Glu128 serves as the catalytic Proton donor. Thr166 serves as a coordination point for (2E)-4-hydroxy-3-methylbut-2-enyl diphosphate. Residue Cys196 coordinates [4Fe-4S] cluster. 4 residues coordinate (2E)-4-hydroxy-3-methylbut-2-enyl diphosphate: Ser224, Ser225, Asn226, and Ser269. Dimethylallyl diphosphate contacts are provided by Ser224, Ser225, Asn226, and Ser269. Residues Ser224, Ser225, Asn226, and Ser269 each coordinate isopentenyl diphosphate.

Belongs to the IspH family. Requires [4Fe-4S] cluster as cofactor.

It carries out the reaction isopentenyl diphosphate + 2 oxidized [2Fe-2S]-[ferredoxin] + H2O = (2E)-4-hydroxy-3-methylbut-2-enyl diphosphate + 2 reduced [2Fe-2S]-[ferredoxin] + 2 H(+). The enzyme catalyses dimethylallyl diphosphate + 2 oxidized [2Fe-2S]-[ferredoxin] + H2O = (2E)-4-hydroxy-3-methylbut-2-enyl diphosphate + 2 reduced [2Fe-2S]-[ferredoxin] + 2 H(+). It functions in the pathway isoprenoid biosynthesis; dimethylallyl diphosphate biosynthesis; dimethylallyl diphosphate from (2E)-4-hydroxy-3-methylbutenyl diphosphate: step 1/1. Its pathway is isoprenoid biosynthesis; isopentenyl diphosphate biosynthesis via DXP pathway; isopentenyl diphosphate from 1-deoxy-D-xylulose 5-phosphate: step 6/6. Its function is as follows. Catalyzes the conversion of 1-hydroxy-2-methyl-2-(E)-butenyl 4-diphosphate (HMBPP) into a mixture of isopentenyl diphosphate (IPP) and dimethylallyl diphosphate (DMAPP). Acts in the terminal step of the DOXP/MEP pathway for isoprenoid precursor biosynthesis. The chain is 4-hydroxy-3-methylbut-2-enyl diphosphate reductase from Tropheryma whipplei (strain TW08/27) (Whipple's bacillus).